The chain runs to 467 residues: tRNA dimethylallyltransferase (467 aa).

The transit peptide at 1–47 (MASVAAARAVPVGSGLRGLQRTLPLVVILGATGTGKSTLALQLGQRL) directs the protein to the mitochondrion. 32–37 (TGTGKS) lines the dimethylallyl diphosphate pocket. Interaction with substrate tRNA stretches follow at residues 55 to 58 (DSMQ) and 183 to 187 (RKVAR). Residues 221–230 (FSNPCILWLH) are core aggregation region. An interaction with isopentenylpyrophosphate transferase region spans residues 233 to 255 (QAVLDERLDKRVDDMLAAGLLEE). Interaction with substrate tRNA stretches follow at residues 281–283 (QSI) and 313–331 (ALKQ…WVKN). The segment at 395-425 (HLCDLCDRIIIGDREWAAHIKSKSHLNQLKK) adopts a Matrin-type zinc-finger fold. The segment at 429–467 (LDSDAVNTIESQSVSPDHNKEPKEKGSPGQNDQELKCSV) is disordered. Over residues 433 to 444 (AVNTIESQSVSP) the composition is skewed to polar residues. Serine 443 bears the Phosphoserine mark. Basic and acidic residues predominate over residues 445-454 (DHNKEPKEKG). Serine 455 carries the phosphoserine modification.

Belongs to the IPP transferase family.

Its subcellular location is the mitochondrion. The protein localises to the cytoplasm. The catalysed reaction is adenosine(37) in tRNA + dimethylallyl diphosphate = N(6)-dimethylallyladenosine(37) in tRNA + diphosphate. Functionally, catalyzes the transfer of a dimethylallyl group onto the adenine at position 37 of both cytosolic and mitochondrial tRNAs, leading to the formation of N6-(dimethylallyl)adenosine (i6A37). Mediates modification of a limited subset of tRNAs: tRNA(Ser)(AGA), tRNA(Ser)(CGA), tRNA(Ser)(UGA), as well as partial modification of the selenocysteine tRNA(Ser)(UCA). TRIT1 is therefore required for selenoprotein expression. The chain is tRNA dimethylallyltransferase (TRIT1) from Homo sapiens (Human).